Here is a 416-residue protein sequence, read N- to C-terminus: Transmembrane protease serine 11B-like protein (416 aa).

The Cytoplasmic portion of the chain corresponds to 1-15 (MYRPVIASRKSIPPW). The helical; Signal-anchor for type II membrane protein transmembrane segment at 16-36 (LIILCVLGVLAALGIIIGLLV) threads the bilayer. The Extracellular segment spans residues 37–416 (HFLAVENKIY…RNWIASKTGI (380 aa)). In terms of domain architecture, SEA spans 44 to 161 (KIYYYQGGFK…GSLKLTEISK (118 aa)). Asparagine 107 carries an N-linked (GlcNAc...) asparagine glycan. Residues 185–415 (ITGGSTAHKG…YRNWIASKTG (231 aa)) enclose the Peptidase S1 domain. A disulfide bridge links cysteine 210 with cysteine 226. The active-site Charge relay system is the histidine 225. N-linked (GlcNAc...) asparagine glycosylation occurs at asparagine 235. Aspartate 270 serves as the catalytic Charge relay system. 2 disulfide bridges follow: cysteine 335–cysteine 351 and cysteine 362–cysteine 391. The Charge relay system role is filled by serine 366.

The protein belongs to the peptidase S1 family. In terms of tissue distribution, expressed in esophagus, cervix, tongue, and testes.

The protein resides in the cell membrane. Its activity is regulated as follows. Inhibited by aprotinin, leupeptin, benzamidine, SERPINA1, SPINT1 and SPINT2. Serine protease. The chain is Transmembrane protease serine 11B-like protein (Tmprss11b) from Mus musculus (Mouse).